Reading from the N-terminus, the 491-residue chain is Iota-carrageenase (491 aa).

A signal peptide spans 1 to 23 (MRLYFRKLWLTNLFLGGALASSA). 4 cysteine pairs are disulfide-bonded: C269–C298, C336–C360, C408–C476, and C412–C484.

It belongs to the glycosyl hydrolase 82 family.

The protein localises to the secreted. The catalysed reaction is Endohydrolysis of 1,4-beta-D-linkages between D-galactose 4-sulfate and 3,6-anhydro-D-galactose-2-sulfate in iota-carrageenans.. Functionally, hydrolyzes iota-carrageenans, sulfated 1,3-alpha-1,4-beta galactans from red algal cell walls, with an inversion of anomeric configuration. Also active against hybrid iota-/nu-carrageenan, not active against kappa- or lambda-carrageenans. In Alteromonas macleodii (Pseudoalteromonas macleodii), this protein is Iota-carrageenase.